Reading from the N-terminus, the 459-residue chain is Putrescine aminotransferase (459 aa).

Pyridoxal 5'-phosphate contacts are provided by residues 150–151 and Gln-274; that span reads GT. Lys-300 carries the post-translational modification N6-(pyridoxal phosphate)lysine. Residue Thr-332 coordinates pyridoxal 5'-phosphate.

This sequence belongs to the class-III pyridoxal-phosphate-dependent aminotransferase family. Putrescine aminotransferase subfamily. Requires pyridoxal 5'-phosphate as cofactor.

The enzyme catalyses an alkane-alpha,omega-diamine + 2-oxoglutarate = an omega-aminoaldehyde + L-glutamate. It carries out the reaction putrescine + 2-oxoglutarate = 1-pyrroline + L-glutamate + H2O. It catalyses the reaction cadaverine + 2-oxoglutarate = 5-aminopentanal + L-glutamate. Its pathway is amine and polyamine degradation; putrescine degradation; 4-aminobutanal from putrescine (transaminase route): step 1/1. Its function is as follows. Catalyzes the aminotransferase reaction from putrescine to 2-oxoglutarate, leading to glutamate and 4-aminobutanal, which spontaneously cyclizes to form 1-pyrroline. This is the first step in one of two pathways for putrescine degradation, where putrescine is converted into 4-aminobutanoate (gamma-aminobutyrate or GABA) via 4-aminobutanal. Also functions as a cadaverine transaminase in a a L-lysine degradation pathway to succinate that proceeds via cadaverine, glutarate and L-2-hydroxyglutarate. This is Putrescine aminotransferase from Salmonella dublin (strain CT_02021853).